A 164-amino-acid polypeptide reads, in one-letter code: Phosphopantetheine adenylyltransferase (164 aa).

Ser-9 contributes to the substrate binding site. ATP-binding positions include 9-10 (SF) and His-17. 3 residues coordinate substrate: Lys-41, Leu-73, and Lys-87. Residues 88–90 (GLR), Glu-98, and 123–129 (YSYLSSS) each bind ATP.

The protein belongs to the bacterial CoaD family. As to quaternary structure, homohexamer. The cofactor is Mg(2+).

The protein localises to the cytoplasm. The catalysed reaction is (R)-4'-phosphopantetheine + ATP + H(+) = 3'-dephospho-CoA + diphosphate. Its pathway is cofactor biosynthesis; coenzyme A biosynthesis; CoA from (R)-pantothenate: step 4/5. Functionally, reversibly transfers an adenylyl group from ATP to 4'-phosphopantetheine, yielding dephospho-CoA (dPCoA) and pyrophosphate. The protein is Phosphopantetheine adenylyltransferase of Clostridium botulinum (strain 657 / Type Ba4).